The following is a 91-amino-acid chain: Acylphosphatase (91 aa).

The 89-residue stretch at 3 to 91 folds into the Acylphosphatase-like domain; it reads TVTMKVTGLV…EKFTRFSVVY (89 aa). Residues Arg-18 and Asn-36 contribute to the active site.

Belongs to the acylphosphatase family.

The catalysed reaction is an acyl phosphate + H2O = a carboxylate + phosphate + H(+). This Lactobacillus gasseri (strain ATCC 33323 / DSM 20243 / BCRC 14619 / CIP 102991 / JCM 1131 / KCTC 3163 / NCIMB 11718 / NCTC 13722 / AM63) protein is Acylphosphatase (acyP).